Consider the following 96-residue polypeptide: Aspartyl/glutamyl-tRNA(Asn/Gln) amidotransferase subunit C (96 aa).

It belongs to the GatC family. In terms of assembly, heterotrimer of A, B and C subunits.

The catalysed reaction is L-glutamyl-tRNA(Gln) + L-glutamine + ATP + H2O = L-glutaminyl-tRNA(Gln) + L-glutamate + ADP + phosphate + H(+). The enzyme catalyses L-aspartyl-tRNA(Asn) + L-glutamine + ATP + H2O = L-asparaginyl-tRNA(Asn) + L-glutamate + ADP + phosphate + 2 H(+). Allows the formation of correctly charged Asn-tRNA(Asn) or Gln-tRNA(Gln) through the transamidation of misacylated Asp-tRNA(Asn) or Glu-tRNA(Gln) in organisms which lack either or both of asparaginyl-tRNA or glutaminyl-tRNA synthetases. The reaction takes place in the presence of glutamine and ATP through an activated phospho-Asp-tRNA(Asn) or phospho-Glu-tRNA(Gln). The protein is Aspartyl/glutamyl-tRNA(Asn/Gln) amidotransferase subunit C of Acaryochloris marina (strain MBIC 11017).